A 268-amino-acid chain; its full sequence is Ribosomal RNA large subunit methyltransferase E (268 aa).

S-adenosyl-L-methionine is bound by residues Gly50, Trp52, Asp68, Asp84, and Asp109. Residue Lys149 is the Proton acceptor of the active site. A TRAM domain is found at 196–254; that stretch reads PLRKGDKFVVDIEKLGSSGDGAVLIEGFVVFVKEVEVGEKVRIKISDVKPNFAFADVEE.

It belongs to the class I-like SAM-binding methyltransferase superfamily. RNA methyltransferase RlmE family.

It localises to the cytoplasm. It catalyses the reaction uridine(2552) in 23S rRNA + S-adenosyl-L-methionine = 2'-O-methyluridine(2552) in 23S rRNA + S-adenosyl-L-homocysteine + H(+). Specifically methylates the uridine in position 2552 of 23S rRNA at the 2'-O position of the ribose in the fully assembled 50S ribosomal subunit. The polypeptide is Ribosomal RNA large subunit methyltransferase E (Methanosarcina mazei (strain ATCC BAA-159 / DSM 3647 / Goe1 / Go1 / JCM 11833 / OCM 88) (Methanosarcina frisia)).